Here is a 116-residue protein sequence, read N- to C-terminus: Ribosome-binding factor A (116 aa).

The protein belongs to the RbfA family. In terms of assembly, monomer. Binds 30S ribosomal subunits, but not 50S ribosomal subunits or 70S ribosomes.

It localises to the cytoplasm. Functionally, one of several proteins that assist in the late maturation steps of the functional core of the 30S ribosomal subunit. Associates with free 30S ribosomal subunits (but not with 30S subunits that are part of 70S ribosomes or polysomes). Required for efficient processing of 16S rRNA. May interact with the 5'-terminal helix region of 16S rRNA. This Clostridium perfringens (strain 13 / Type A) protein is Ribosome-binding factor A.